The following is a 235-amino-acid chain: Large ribosomal subunit protein uL1 (235 aa).

It belongs to the universal ribosomal protein uL1 family. As to quaternary structure, part of the 50S ribosomal subunit.

Its function is as follows. Binds directly to 23S rRNA. The L1 stalk is quite mobile in the ribosome, and is involved in E site tRNA release. In terms of biological role, protein L1 is also a translational repressor protein, it controls the translation of the L11 operon by binding to its mRNA. The chain is Large ribosomal subunit protein uL1 from Mycobacterium bovis (strain ATCC BAA-935 / AF2122/97).